The primary structure comprises 327 residues: GPI-linked NAD(P)(+)--arginine ADP-ribosyltransferase 1 (327 aa).

A signal peptide spans 1 to 22 (MWVPAVANLLLLSLGLLEAIQA). 2 disulfides stabilise this stretch: C53/C277 and C174/C224. Residue N65 is glycosylated (N-linked (GlcNAc...) asparagine). Residues 73–273 (KVYADGWALA…IYLKALGKRS (201 aa)) enclose the TR mART core domain. The NAD(+) site is built by Y121 and R179. Catalysis depends on residues R179 and S202. S233 contributes to the NAD(+) binding site. E240 is a catalytic residue. Residue N253 is glycosylated (N-linked (GlcNAc...) asparagine). S295 is lipidated: GPI-anchor amidated serine. Residues 296–327 (ASAQERLSTAWSLLLLLAFLAVGPFPGSPGLF) constitute a propeptide, removed in mature form.

This sequence belongs to the Arg-specific ADP-ribosyltransferase family. As to expression, primarily in skeletal and cardiac muscle.

It localises to the sarcoplasmic reticulum membrane. The catalysed reaction is L-arginyl-[protein] + NAD(+) = N(omega)-(ADP-D-ribosyl)-L-arginyl-[protein] + nicotinamide + H(+). Functionally, has ADP-ribosyltransferase activity toward GLP1R. The chain is GPI-linked NAD(P)(+)--arginine ADP-ribosyltransferase 1 (ART1) from Oryctolagus cuniculus (Rabbit).